Reading from the N-terminus, the 323-residue chain is Glyoxylate/hydroxypyruvate reductase B (323 aa).

Active-site residues include Arg-237 and Glu-266. The active-site Proton donor is His-285.

It belongs to the D-isomer specific 2-hydroxyacid dehydrogenase family. GhrB subfamily. In terms of assembly, homodimer.

The protein resides in the cytoplasm. It carries out the reaction glycolate + NADP(+) = glyoxylate + NADPH + H(+). The enzyme catalyses (R)-glycerate + NAD(+) = 3-hydroxypyruvate + NADH + H(+). It catalyses the reaction (R)-glycerate + NADP(+) = 3-hydroxypyruvate + NADPH + H(+). Catalyzes the NADPH-dependent reduction of glyoxylate and hydroxypyruvate into glycolate and glycerate, respectively. This Klebsiella pneumoniae subsp. pneumoniae (strain ATCC 700721 / MGH 78578) protein is Glyoxylate/hydroxypyruvate reductase B.